The primary structure comprises 53 residues: Collagen alpha-1(I) chain (53 aa).

Positions 1–53 are disordered; the sequence is SYGYBZKSAGVSVPGPMGPSGPRGLPGPPGAPGPZGFZGPPGZPGZPGSSGPM. K7 bears the Allysine mark. The residue at position 8 (S8) is a Phosphoserine. Low complexity predominate over residues 10–23; that stretch reads GVSVPGPMGPSGPR. Residues P26, P29, P32, P41, P44, and P47 each carry the 4-hydroxyproline modification. The segment covering 34-53 has biased composition (low complexity); sequence PZGFZGPPGZPGZPGSSGPM.

The protein belongs to the fibrillar collagen family. As to quaternary structure, trimers of one alpha 2(I) and two alpha 1(I) chains. Interacts with MRC2. Interacts with TRAM2. Interacts with MFAP4 in a Ca (2+)-dependent manner. Post-translationally, contains mostly 4-hydroxyproline. Proline residues at the third position of the tripeptide repeating unit (G-X-Y) are hydroxylated in some or all of the chains. In terms of processing, contains 3-hydroxyproline at a few sites. This modification occurs on the first proline residue in the sequence motif Gly-Pro-Hyp, where Hyp is 4-hydroxyproline. Lysine residues at the third position of the tripeptide repeating unit (G-X-Y) are 5-hydroxylated in some or all of the chains. Post-translationally, O-glycosylated on hydroxylated lysine residues. The O-linked glycan consists of a Glc-Gal disaccharide. As to expression, forms the fibrils of tendon, ligaments and bones. In bones the fibrils are mineralized with calcium hydroxyapatite.

The protein resides in the secreted. It localises to the extracellular space. It is found in the extracellular matrix. In terms of biological role, type I collagen is a member of group I collagen (fibrillar forming collagen). This is Collagen alpha-1(I) chain (COL1A1) from Oryctolagus cuniculus (Rabbit).